The primary structure comprises 347 residues: Phosphate acyltransferase (347 aa).

This sequence belongs to the PlsX family. As to quaternary structure, homodimer. Probably interacts with PlsY.

It localises to the cytoplasm. It catalyses the reaction a fatty acyl-[ACP] + phosphate = an acyl phosphate + holo-[ACP]. It functions in the pathway lipid metabolism; phospholipid metabolism. Catalyzes the reversible formation of acyl-phosphate (acyl-PO(4)) from acyl-[acyl-carrier-protein] (acyl-ACP). This enzyme utilizes acyl-ACP as fatty acyl donor, but not acyl-CoA. The sequence is that of Phosphate acyltransferase from Sinorhizobium medicae (strain WSM419) (Ensifer medicae).